Here is an 88-residue protein sequence, read N- to C-terminus: Putative septation protein SpoVG (88 aa).

It belongs to the SpoVG family.

Could be involved in septation. The sequence is that of Putative septation protein SpoVG from Caldicellulosiruptor saccharolyticus (strain ATCC 43494 / DSM 8903 / Tp8T 6331).